Here is an 84-residue protein sequence, read N- to C-terminus: Peptide Ctry2346 (84 aa).

The first 23 residues, 1 to 23, serve as a signal peptide directing secretion; that stretch reads MKTQTLLFTFSLVLLMVATQTEA. Leucine amide is present on Leu-33. Positions 37 to 84 are excised as a propeptide; it reads GLLDNLLGKRGLLFGKRALTNQDLFDLAYDPSLSAADMDALEMLLENY.

It belongs to the non-disulfide-bridged peptide (NDBP) superfamily. Short antimicrobial peptide (group 4) family. In terms of tissue distribution, expressed by the venom gland.

Its subcellular location is the secreted. The protein localises to the target cell membrane. In terms of biological role, antimicrobial peptide. The polypeptide is Peptide Ctry2346 (Chaerilus tryznai (Scorpion)).